The chain runs to 552 residues: Putative transport protein YE4162 (552 aa).

6 consecutive transmembrane segments (helical) span residues 1 to 21, 26 to 46, 65 to 85, 96 to 116, 119 to 139, and 158 to 178; these read MSAI…GLWI, VYGV…VGHF, FGLI…FFSS, FAIL…KLFA, LPII…LGAA, and MGYA…MWLI. RCK C-terminal domains are found at residues 192–276 and 279–361; these read EFDS…VVGE and DVTL…VVGN. Helical transmembrane passes span 371–391, 393–413, 439–459, 464–484, 493–513, and 530–550; these read MLPV…PLFI, GFPA…ALIL, IVLF…NTLV, LAWI…VGIL, YLTL…LAFA, and VYPL…VLFW.

It belongs to the AAE transporter (TC 2.A.81) family. YidE subfamily.

The protein resides in the cell membrane. This chain is Putative transport protein YE4162, found in Yersinia enterocolitica serotype O:8 / biotype 1B (strain NCTC 13174 / 8081).